A 698-amino-acid chain; its full sequence is Methionine synthase reductase (698 aa).

The region spanning 5-147 (LLLYATQQGQ…VVEPWIAGLW (143 aa)) is the Flavodoxin-like domain. 93–124 (LLGLGDSEYTYFCNGGKIIDKRLQELGARHFY) provides a ligand contact to FMN. A hinge region spans residues 166–247 (ALPVASPASS…ASLNIPGLPP (82 aa)). 2 positions are modified to phosphoserine: S171 and S189. Residues 271-533 (DPVFQVPISK…PRTTNSFHLP (263 aa)) enclose the FAD-binding FR-type domain. K291 is a binding site for NADP(+). Residues 451 to 454 (RPYS) and 487 to 490 (GVCT) each bind FAD. NADP(+)-binding positions include 610-611 (SR), 624-626 (YVQ), and D659. Residue W697 participates in FAD binding.

Forms a multiprotein complex with MMACHC, MMADHC and MTR. The cofactor is FAD. Requires FMN as cofactor. Found in all tissues tested, particularly abundant in skeletal muscle.

Its subcellular location is the cytoplasm. The catalysed reaction is 2 methylcob(III)alamin-[methionine synthase] + 2 S-adenosyl-L-homocysteine + NADP(+) + H(+) = 2 cob(II)alamin-[methionine synthase] + 2 S-adenosyl-L-methionine + NADPH. The enzyme catalyses 2 cob(II)alamin + A + 2 H2O + 2 H(+) = 2 aquacob(III)alamin + AH2. Key enzyme in methionine and folate homeostasis responsible for the reactivation of methionine synthase (MTR/MS) activity by catalyzing the reductive methylation of MTR-bound cob(II)alamin. Cobalamin (vitamin B12) forms a complex with MTR to serve as an intermediary in methyl transfer reactions that cycles between MTR-bound methylcob(III)alamin and MTR bound-cob(I)alamin forms, and occasional oxidative escape of the cob(I)alamin intermediate during the catalytic cycle leads to the inactive cob(II)alamin species. The processing of cobalamin in the cytosol occurs in a multiprotein complex composed of at least MMACHC, MMADHC, MTRR and MTR which may contribute to shuttle safely and efficiently cobalamin towards MTR in order to produce methionine. Also necessary for the utilization of methyl groups from the folate cycle, thereby affecting transgenerational epigenetic inheritance. Also acts as a molecular chaperone for methionine synthase by stabilizing apoMTR and incorporating methylcob(III)alamin into apoMTR to form the holoenzyme. Also serves as an aquacob(III)alamin reductase by reducing aquacob(III)alamin to cob(II)alamin; this reduction leads to stimulation of the conversion of apoMTR and aquacob(III)alamin to MTR holoenzyme. In Homo sapiens (Human), this protein is Methionine synthase reductase.